Here is a 361-residue protein sequence, read N- to C-terminus: Beta-hexosaminidase (361 aa).

Substrate contacts are provided by residues aspartate 69, arginine 77, arginine 144, and 174–175 (KH). The Proton donor/acceptor role is filled by histidine 187. Aspartate 258 acts as the Nucleophile in catalysis.

It belongs to the glycosyl hydrolase 3 family. NagZ subfamily.

The protein localises to the cytoplasm. The enzyme catalyses Hydrolysis of terminal non-reducing N-acetyl-D-hexosamine residues in N-acetyl-beta-D-hexosaminides.. It functions in the pathway cell wall biogenesis; peptidoglycan recycling. Plays a role in peptidoglycan recycling by cleaving the terminal beta-1,4-linked N-acetylglucosamine (GlcNAc) from peptide-linked peptidoglycan fragments, giving rise to free GlcNAc, anhydro-N-acetylmuramic acid and anhydro-N-acetylmuramic acid-linked peptides. The protein is Beta-hexosaminidase of Neisseria gonorrhoeae (strain NCCP11945).